The sequence spans 258 residues: Myelin proteolipid protein (258 aa).

The Cytoplasmic portion of the chain corresponds to 1–22 (MFPVRHALLCKALGCYDCCIRC). Residues Cys-18, Cys-19, and Cys-22 are each lipidated (S-palmitoyl cysteine). A helical membrane pass occupies residues 23 to 48 (LGAVPYPSLVSTLLCFTGMALFCGCG). Topologically, residues 49 to 82 (HEALAHTEVLVETYFVRNIQDYVILASFIKYFQY) are extracellular. A helical transmembrane segment spans residues 83–103 (VIYGLASFFFLYCILLLAEGF). Over 104–128 (YTTSAVKQTFGEFRSTRCGRCLSLT) the chain is Cytoplasmic. Residues Cys-121 and Cys-124 are each lipidated (S-palmitoyl cysteine). The helical transmembrane segment at 129–149 (FIIVTYVLAVIWLAVFAFTAI) threads the bilayer. Residues 150 to 218 (PSSSSLIWHR…KTKEFFVTYD (69 aa)) lie on the Extracellular side of the membrane. Cys-181 and Cys-200 are disulfide-bonded. A helical transmembrane segment spans residues 219–239 (LYIAAFAGAGIALLALFLYVV). The Cytoplasmic segment spans residues 240–258 (ATTYNYAVLRFLGRKGLRC).

The protein belongs to the myelin proteolipid protein family. In terms of tissue distribution, central nervous system. Highest levels in spinal cord and medulla oblongata.

Its subcellular location is the cell membrane. This is the major myelin protein from the central nervous system. It plays an important role in the formation or maintenance of the multilamellar structure of myelin. May be involved in neuron and glial cell differentiation. In Oncorhynchus mykiss (Rainbow trout), this protein is Myelin proteolipid protein (plp).